Reading from the N-terminus, the 187-residue chain is Ribosome-recycling factor (187 aa).

The protein belongs to the RRF family.

It is found in the cytoplasm. Its function is as follows. Responsible for the release of ribosomes from messenger RNA at the termination of protein biosynthesis. May increase the efficiency of translation by recycling ribosomes from one round of translation to another. This Nitrobacter winogradskyi (strain ATCC 25391 / DSM 10237 / CIP 104748 / NCIMB 11846 / Nb-255) protein is Ribosome-recycling factor.